The following is a 1074-amino-acid chain: MKDIGQQLYTTHLNGGHNSLTMSPKQPDANGAPRPNRQEAQTLLYQGSEAEAAMMTIATCAKCKSVHKISLQDLQKGTGKDGMYVCFQCSLGAAPPNFHFVSNNSSATHVGNKTENFSSSVNSKFKVRNFKPGKYYCDKCRFSTKDPLQYKKHTLQHEEIKFICSHCSYISYTKGEFQRHLVKHTGIFPYQCEYCDYGAIRNDYIVKHTKRVHERAGAKRPVKAVAKLEPKRTGTSKQNPELLKASNPRTTFQNKWSDQLSGFSLHANKDKMHNIMLLPEPKEYQKDVVCIPNKMTLSEPNEVNLFENKNVEVEVLSPAKEPVQPGMPLTVVAPAELVVPANCLAQLIDVKVVNGTQQLVLKLFPLEENNCLEAGRDNGGNSERMVKEKGSNEQEKVLSAEKTKSLTVDGNVGKLVGIDSFQPSVQKQLKNVKWVRSYDFIMPNSSVHNNGKSFINSETIEDFQKKNNLYPHRTAFPSVALKGHSLASVFKNSVLRSLGAASNPFPYKAAVCFAESGRNLHSSSQQLLPFAASPATCSFSGEKGLLPVSENDLESTSKVNIPVKVVSSNRKQEDNQTEEHKAVSTVGQISSQHKSEYLHINITGEDRSQQPGDKPLELKNSERTNNTNDGPVISSVFSLSSGSENVPEGIKWNSSTSKIKSIELLRRKIAQLIESCGKPSSLASNSAHRRSVGQASKGTSKATSEGIQEINVSLTGLGHSTGTLQKPPNDGGITGNRQLTHQQIYPHFADGSNRKTKSRVARKAHVATPVLIPKGAVLRVLNSSENAHIIEATCEAPVSIPCSERQLIKPVPFCPVRQADSDLQPLRSERGPIDMSPNIETPLRPKLRKESAVCSTIHRKTGLLYGQQGSSELNKQGRLLSRSLSISRNKTKQVHLSRKKNKIQAEPSRCLKDPSIFQVARQLRLIAAKPDQLIKCPRRNQPVIVLNHPDVDSPEVTNVMKVINKYKGNVLKVVLSERTRCQLGIRRHHVRLTYQNAEEASQIKRQMMLKMKLKKVHKNNYQVVDSLPDDSSQCVFKCWFCGRLYEDQEEWMSHGQRHLIEATRDWDVLSSKGK.

Residues 12–24 (HLNGGHNSLTMSP) show a composition bias toward polar residues. Residues 12–36 (HLNGGHNSLTMSPKQPDANGAPRPN) are disordered. 2 C2H2-type zinc fingers span residues 162–184 (FICS…LVKH) and 190–213 (YQCE…KRVH). Glycyl lysine isopeptide (Lys-Gly) (interchain with G-Cter in SUMO2) cross-links involve residues Lys482, Lys491, and Lys558. Residues 568 to 590 (SNRKQEDNQTEEHKAVSTVGQIS) form a disordered region. Residues 570 to 582 (RKQEDNQTEEHKA) show a composition bias toward basic and acidic residues. Lys594 is covalently cross-linked (Glycyl lysine isopeptide (Lys-Gly) (interchain with G-Cter in SUMO2)). 2 disordered regions span residues 603–632 (TGED…DGPV) and 678–704 (KPSS…KATS). The segment covering 604 to 622 (GEDRSQQPGDKPLELKNSE) has biased composition (basic and acidic residues). The span at 693-704 (GQASKGTSKATS) shows a compositional bias: polar residues. Glycyl lysine isopeptide (Lys-Gly) (interchain with G-Cter in SUMO2) cross-links involve residues Lys809, Lys846, and Lys860. A C2H2-type 3 zinc finger spans residues 1036–1058 (FKCWFCGRLYEDQEEWMSHGQRH).

This sequence belongs to the krueppel C2H2-type zinc-finger protein family.

It is found in the nucleus. Its function is as follows. Through its association with the EHMT1-EHMT2/G9A and PRC2/EED-EZH2 histone methyltransferase complexes may function in gene silencing, regulating repressive post-translational methylation of histone tails at promoters of target genes. The polypeptide is Zinc finger protein 518B (ZNF518B) (Homo sapiens (Human)).